Here is a 482-residue protein sequence, read N- to C-terminus: O-phosphoseryl-tRNA(Sec) selenium transferase (482 aa).

The tract at residues 1–36 (MKSSFGKKEGEYSRLVSKSSNKLLNSLWEKKQIPEE) is tetramerization. Arg69 is a pyridoxal 5'-phosphate binding site. Residues 90–100 (GRSGNLLEIQP) are phosphate loop (P-loop). Positions 91, 92, and 99 each coordinate substrate. Lys277 carries the N6-(pyridoxal phosphate)lysine modification. Arg306 contributes to the substrate binding site. Arg388 is a binding site for tRNA. A disordered region spans residues 461 to 482 (DRRGGSSGRRVPMNESFDMEND).

It belongs to the SepSecS family. Homotetramer formed by a catalytic dimer and a non-catalytic dimer serving as a binding platform that orients tRNASec for catalysis. Each tetramer binds the CCA ends of two tRNAs which point to the active sites of the catalytic dimer. The cofactor is pyridoxal 5'-phosphate.

Its subcellular location is the cytoplasm. It carries out the reaction O-phospho-L-seryl-tRNA(Sec) + selenophosphate + H2O = L-selenocysteinyl-tRNA(Sec) + 2 phosphate. It participates in aminoacyl-tRNA biosynthesis; selenocysteinyl-tRNA(Sec) biosynthesis; selenocysteinyl-tRNA(Sec) from L-seryl-tRNA(Sec) (archaeal/eukaryal route): step 2/2. Converts O-phosphoseryl-tRNA(Sec) to selenocysteinyl-tRNA(Sec) required for selenoprotein biosynthesis. In Caenorhabditis briggsae, this protein is O-phosphoseryl-tRNA(Sec) selenium transferase (secs-1).